The following is a 61-amino-acid chain: MANFLGISDLLGQILKALTRITFDVLFTLAKYVIRGFGHWIMDTFRYLNDFTVWITRLAKR.

This is an uncharacterized protein from Acidianus convivator (ABV).